Here is a 201-residue protein sequence, read N- to C-terminus: 3-isopropylmalate dehydratase small subunit (201 aa).

This sequence belongs to the LeuD family. LeuD type 1 subfamily. As to quaternary structure, heterodimer of LeuC and LeuD.

The catalysed reaction is (2R,3S)-3-isopropylmalate = (2S)-2-isopropylmalate. It functions in the pathway amino-acid biosynthesis; L-leucine biosynthesis; L-leucine from 3-methyl-2-oxobutanoate: step 2/4. Its function is as follows. Catalyzes the isomerization between 2-isopropylmalate and 3-isopropylmalate, via the formation of 2-isopropylmaleate. This is 3-isopropylmalate dehydratase small subunit from Klebsiella pneumoniae (strain 342).